The following is an 872-amino-acid chain: Protein SEY1 (872 aa).

At 1-749 (MVANGHFAGV…KRSAIGGITQ (749 aa)) the chain is on the cytoplasmic side. The region spanning 49 to 307 (GFNYHLISVF…IPADGFAVYA (259 aa)) is the GB1/RHD3-type G domain. 59-66 (GSQSTGKS) is a GTP binding site. Residues 482 to 504 (SNYQQELSLYQKDLENIGGQLRR) are a coiled coil. The disordered stretch occupies residues 676 to 704 (LDKWIGHTPSSATPADEEDLTPIGGVDED). Positions 690 to 704 (ADEEDLTPIGGVDED) are enriched in acidic residues. The chain crosses the membrane as a helical span at residues 750-770 (VPLYFYGLLLALGWNEIVAVL). Over 771 to 773 (RNP) the chain is Lumenal. The chain crosses the membrane as a helical span at residues 774-794 (AYFLLLFVCAVTAYVTYQLNL). Over 795 to 872 (WGPIIKMTEA…IDDADDDDDF (78 aa)) the chain is Cytoplasmic. The tract at residues 849-872 (NRKSAGGFQNNRSHIDDADDDDDF) is disordered.

This sequence belongs to the TRAFAC class dynamin-like GTPase superfamily. GB1/RHD3 GTPase family. RHD3 subfamily.

It is found in the endoplasmic reticulum membrane. Its function is as follows. Cooperates with the reticulon proteins and tubule-shaping DP1 family proteins to generate and maintain the structure of the tubular endoplasmic reticulum network. Has GTPase activity, which is required for its function in ER organization. The polypeptide is Protein SEY1 (Paracoccidioides brasiliensis (strain Pb18)).